We begin with the raw amino-acid sequence, 197 residues long: Histocompatibility antigen 60c (197 aa).

Positions 1–17 (MALLLLILESCSAGTYA) are cleaved as a signal peptide. Residues Asn51, Asn81, and Asn114 are each glycosylated (N-linked (GlcNAc...) asparagine). Ser177 carries GPI-anchor amidated serine lipidation. Residues 178–197 (MACKSSPFDGLIMILLIYIL) constitute a propeptide, removed in mature form.

Belongs to the NKG2D ligand family. Expressed in skin, and weakly in large intestine.

The protein localises to the cell membrane. Functionally, ligand for the KLRK1 immunosurveillance receptor. Binding to KLRK1 stimulates cell lysis in vitro. In Mus musculus (Mouse), this protein is Histocompatibility antigen 60c.